A 299-amino-acid chain; its full sequence is N-acetylaspartate synthetase (299 aa).

Over residues 44 to 57 (AAPGPAAAPPPAAG) the composition is skewed to pro residues. The segment at 44–70 (AAPGPAAAPPPAAGPQPHGGTGGAGPP) is disordered. The segment covering 60–70 (PHGGTGGAGPP) has biased composition (gly residues). Residues 118-138 (YALLAALCFAVTRSLLLTCLV) form a helical membrane-spanning segment. Residues 143–280 (LALRYYYSRK…VLPGMTLSLA (138 aa)) form the N-acetyltransferase domain.

The protein belongs to the NAT8 family. In terms of tissue distribution, expressed in brain, kidney, liver and spleen. In brain, present in neurons but not in astrocytes (at protein level). Expressed in brain, thymus and spleen.

The protein resides in the cytoplasm. It is found in the microsome membrane. It localises to the mitochondrion membrane. The protein localises to the endoplasmic reticulum membrane. The enzyme catalyses L-aspartate + acetyl-CoA = N-acetyl-L-aspartate + CoA + H(+). Its activity is regulated as follows. Aminooxyacetic acid (AOAA) blocks its activity in both cytoplasm and mitochondria. Functionally, catalyzes the synthesis of N-acetylaspartate acid (NAA) from L-aspartate and acetyl-CoA. Promotes dopamine uptake by regulating TNF-alpha expression. Attenuates methamphetamine-induced inhibition of dopamine uptake. The sequence is that of N-acetylaspartate synthetase (Nat8l) from Mus musculus (Mouse).